The chain runs to 35 residues: Potassium channel toxin alpha-KTx 6.15 (35 aa).

Disulfide bonds link cysteine 3/cysteine 24, cysteine 9/cysteine 29, cysteine 13/cysteine 31, and cysteine 19/cysteine 34.

This sequence belongs to the short scorpion toxin superfamily. Potassium channel inhibitor family. Alpha-KTx 06 subfamily. Expressed by the venom gland.

The protein localises to the secreted. Blocks voltage-gated potassium channels rKv1.1/KCNA1 (IC(50)=13 nM), rKv1.2/KCNA2 (IC(50)=16 nM) and rKv1.3/KCNA3 (IC(50)=2 nM). The protein is Potassium channel toxin alpha-KTx 6.15 of Hemiscorpius lepturus (Scorpion).